A 218-amino-acid polypeptide reads, in one-letter code: MIKLEGITKSFGSLQVLKGIDLEINKGEIVSIVGPSGAGKTTLLQIMGTLDEPDAGTVAIDGTVVSRMKEKELSAFRNKNIGFVFQFHQLLPEFTALENVMIPAFIAGVSSKEANERAMEILAFMGLTDRASHKPNELSGGEKQRVAVARALINHPAVILADEPSGSLDTHNKEDLHQLFFDLRDRLGQTFVIVTHDEGLAKITDRTVHMVDGTIKKD.

Positions isoleucine 2–aspartate 218 constitute an ABC transporter domain. Glycine 34–threonine 41 is an ATP binding site.

It belongs to the ABC transporter superfamily. Lipoprotein translocase (TC 3.A.1.125) family. The complex is composed of two ATP-binding proteins (LolD) and two transmembrane proteins (LolC and LolE).

It localises to the cell inner membrane. Part of the ABC transporter complex LolCDE involved in the translocation of mature outer membrane-directed lipoproteins, from the inner membrane to the periplasmic chaperone, LolA. Responsible for the formation of the LolA-lipoprotein complex in an ATP-dependent manner. This Bacteroides thetaiotaomicron (strain ATCC 29148 / DSM 2079 / JCM 5827 / CCUG 10774 / NCTC 10582 / VPI-5482 / E50) protein is Lipoprotein-releasing system ATP-binding protein LolD.